The following is a 227-amino-acid chain: Cytochrome c oxidase subunit 2 (227 aa).

Residues 1–14 (MACPVQLGFQDAAS) lie on the Mitochondrial intermembrane side of the membrane. A helical transmembrane segment spans residues 15-45 (PIMEELTYFHDHTLMIVFLISSLVLYIISLM). At 46-59 (LTTELTHTSTMDAQ) the chain is on the mitochondrial matrix side. A helical transmembrane segment spans residues 60–87 (EVETVWTILPAVILILIALPSLRILYMM). The Mitochondrial intermembrane portion of the chain corresponds to 88–227 (DEITTPSLTL…HFEEWLLAML (140 aa)). Histidine 161, cysteine 196, glutamate 198, cysteine 200, histidine 204, and methionine 207 together coordinate Cu cation. A Mg(2+)-binding site is contributed by glutamate 198.

Belongs to the cytochrome c oxidase subunit 2 family. In terms of assembly, component of the cytochrome c oxidase (complex IV, CIV), a multisubunit enzyme composed of 14 subunits. The complex is composed of a catalytic core of 3 subunits MT-CO1, MT-CO2 and MT-CO3, encoded in the mitochondrial DNA, and 11 supernumerary subunits COX4I, COX5A, COX5B, COX6A, COX6B, COX6C, COX7A, COX7B, COX7C, COX8 and NDUFA4, which are encoded in the nuclear genome. The complex exists as a monomer or a dimer and forms supercomplexes (SCs) in the inner mitochondrial membrane with NADH-ubiquinone oxidoreductase (complex I, CI) and ubiquinol-cytochrome c oxidoreductase (cytochrome b-c1 complex, complex III, CIII), resulting in different assemblies (supercomplex SCI(1)III(2)IV(1) and megacomplex MCI(2)III(2)IV(2)). Found in a complex with TMEM177, COA6, COX18, COX20, SCO1 and SCO2. Interacts with TMEM177 in a COX20-dependent manner. Interacts with COX20. Interacts with COX16. Cu cation serves as cofactor.

The protein localises to the mitochondrion inner membrane. It catalyses the reaction 4 Fe(II)-[cytochrome c] + O2 + 8 H(+)(in) = 4 Fe(III)-[cytochrome c] + 2 H2O + 4 H(+)(out). Functionally, component of the cytochrome c oxidase, the last enzyme in the mitochondrial electron transport chain which drives oxidative phosphorylation. The respiratory chain contains 3 multisubunit complexes succinate dehydrogenase (complex II, CII), ubiquinol-cytochrome c oxidoreductase (cytochrome b-c1 complex, complex III, CIII) and cytochrome c oxidase (complex IV, CIV), that cooperate to transfer electrons derived from NADH and succinate to molecular oxygen, creating an electrochemical gradient over the inner membrane that drives transmembrane transport and the ATP synthase. Cytochrome c oxidase is the component of the respiratory chain that catalyzes the reduction of oxygen to water. Electrons originating from reduced cytochrome c in the intermembrane space (IMS) are transferred via the dinuclear copper A center (CU(A)) of subunit 2 and heme A of subunit 1 to the active site in subunit 1, a binuclear center (BNC) formed by heme A3 and copper B (CU(B)). The BNC reduces molecular oxygen to 2 water molecules using 4 electrons from cytochrome c in the IMS and 4 protons from the mitochondrial matrix. The protein is Cytochrome c oxidase subunit 2 (MT-CO2) of Cheirogaleus medius (Fat-tailed dwarf lemur).